The following is a 70-amino-acid chain: V-type proton ATPase subunit e1 (70 aa).

2 helical membrane-spanning segments follow: residues 1–21 (MGFL…SLCV) and 36–56 (LTLV…VYIA).

It belongs to the V-ATPase e1/e2 subunit family. In terms of assembly, V-ATPase is a heteromultimeric enzyme composed of a peripheral catalytic V1 complex (components A to H) attached to an integral membrane V0 proton pore complex (components: a, c, c'', d and e).

Its subcellular location is the golgi apparatus. The protein resides in the trans-Golgi network membrane. Its function is as follows. Subunit of the integral membrane V0 complex of vacuolar ATPase. V-ATPase is responsible for acidifying a variety of intracellular compartments in eukaryotic cells. This chain is V-type proton ATPase subunit e1 (VHA-e1), found in Arabidopsis thaliana (Mouse-ear cress).